The sequence spans 435 residues: MEFMSSPFPITKLPLVPRCKILKFFDYGDLLDISLCSKRMAQTVRDIHITADLHYLTLGKDNQQSIQIQFKQEQKVIYWDFKLDLVEEEMPERRTVGAIVFEKCRKYSQREIGLFQFSSYHYDIEDSIGEVSKHLFYIFPTSIEIRLSVQFCRTLRNLFSYEHLQNIDVLTLLGSIMLQNVLEKIFSRVKIRRKLWVEPETDDEYPILQALHVENLHLASARWMTRDHLLQLTCCSVDFHEHYFGWKDLTVFAENWLNNKNSKLEMVRFGWPNDIDSLSANFEGLKTHKWDPKQREKKFLYSKDNRLHRIDCTKGLELERDDGELATWIYEPDPLTSSLYFLVWTERFPEKKRLEKLPKMLAPYYEQLVQLRKEYDDSCNLEWLLSNPNLKLDEFVETYRILRGMDSEVRLSSIGRVRRRRIFDEMYNIIDAQND.

The F-box domain occupies 7–58; the sequence is PFPITKLPLVPRCKILKFFDYGDLLDISLCSKRMAQTVRDIHITADLHYLTL.

This is an uncharacterized protein from Caenorhabditis elegans.